The following is a 432-amino-acid chain: D-amino acid dehydrogenase (432 aa).

3 to 17 (VLVLGSGVIGTASAY) provides a ligand contact to FAD.

It belongs to the DadA oxidoreductase family. FAD serves as cofactor.

It catalyses the reaction a D-alpha-amino acid + A + H2O = a 2-oxocarboxylate + AH2 + NH4(+). It participates in amino-acid degradation; D-alanine degradation; NH(3) and pyruvate from D-alanine: step 1/1. Oxidative deamination of D-amino acids. This is D-amino acid dehydrogenase from Ectopseudomonas mendocina (strain ymp) (Pseudomonas mendocina).